Consider the following 317-residue polypeptide: L-lactate dehydrogenase (317 aa).

Residues V17, D38, K43, Y69, and 83 to 84 each bind NAD(+); that span reads GA. Substrate is bound by residues Q86 and R92. NAD(+)-binding positions include S105, 122–124, and S147; that span reads ATN. Substrate is bound at residue 124–127; sequence NPVD. 152–155 provides a ligand contact to substrate; it reads DSAR. Residues R157 and H172 each contribute to the beta-D-fructose 1,6-bisphosphate site. Catalysis depends on H179, which acts as the Proton acceptor. At Y224 the chain carries Phosphotyrosine. Position 233 (T233) interacts with substrate.

The protein belongs to the LDH/MDH superfamily. LDH family. In terms of assembly, homotetramer.

Its subcellular location is the cytoplasm. The catalysed reaction is (S)-lactate + NAD(+) = pyruvate + NADH + H(+). It functions in the pathway fermentation; pyruvate fermentation to lactate; (S)-lactate from pyruvate: step 1/1. Allosterically activated by fructose 1,6-bisphosphate (FBP). In terms of biological role, catalyzes the conversion of lactate to pyruvate. This is L-lactate dehydrogenase from Bacillus velezensis (strain DSM 23117 / BGSC 10A6 / LMG 26770 / FZB42) (Bacillus amyloliquefaciens subsp. plantarum).